The chain runs to 74 residues: uncharacterized protein (74 aa).

A helical transmembrane segment spans residues 7–26; sequence IHLYVMASAMSSSPIFFFFQ.

The protein resides in the membrane. This is an uncharacterized protein from Homo sapiens (Human).